We begin with the raw amino-acid sequence, 565 residues long: uncharacterized protein (565 aa).

The next 13 membrane-spanning stretches (helical) occupy residues 8–28, 43–63, 95–115, 137–157, 167–187, 227–247, 268–288, 314–334, 367–387, 424–444, 460–480, 482–502, and 516–536; these read ISFI…GIFF, LAIF…LALI, MTYL…ICSI, WLIW…IPPL, MVVS…GFIV, FTGI…FFAY, WALF…AVAL, IVFG…INGF, VVGV…FTVI, ATWT…GAIV, FLPA…VTII, PFIN…TVLG, and VMLI…VYVE.

This sequence to M.pneumoniae MPN_095 and MPN_096.

The protein localises to the cell membrane. This is an uncharacterized protein from Mycoplasma pneumoniae (strain ATCC 29342 / M129 / Subtype 1) (Mycoplasmoides pneumoniae).